The chain runs to 95 residues: Aspartyl/glutamyl-tRNA(Asn/Gln) amidotransferase subunit C (95 aa).

Belongs to the GatC family. In terms of assembly, heterotrimer of A, B and C subunits.

The enzyme catalyses L-glutamyl-tRNA(Gln) + L-glutamine + ATP + H2O = L-glutaminyl-tRNA(Gln) + L-glutamate + ADP + phosphate + H(+). It carries out the reaction L-aspartyl-tRNA(Asn) + L-glutamine + ATP + H2O = L-asparaginyl-tRNA(Asn) + L-glutamate + ADP + phosphate + 2 H(+). In terms of biological role, allows the formation of correctly charged Asn-tRNA(Asn) or Gln-tRNA(Gln) through the transamidation of misacylated Asp-tRNA(Asn) or Glu-tRNA(Gln) in organisms which lack either or both of asparaginyl-tRNA or glutaminyl-tRNA synthetases. The reaction takes place in the presence of glutamine and ATP through an activated phospho-Asp-tRNA(Asn) or phospho-Glu-tRNA(Gln). This Bradyrhizobium sp. (strain BTAi1 / ATCC BAA-1182) protein is Aspartyl/glutamyl-tRNA(Asn/Gln) amidotransferase subunit C.